Reading from the N-terminus, the 572-residue chain is Probable lysosomal cobalamin transporter (572 aa).

Transmembrane regions (helical) follow at residues 8-28 (VIWFAYLIVIFVLIVVASVFI), 40-60 (FVTFICVFSIAALLATVMLLP), 95-115 (IIYYSLYFLDALLCFVGIPFA), 145-165 (TLTFIAVVIALVLVGFFAPMM), 188-208 (AFTFLLGFVTIIGSCLYAFYT), 314-334 (GGFCLFLVGLSTWISLLMTVV), 374-394 (IIFALIVFFFFWGSVVGVVAV), 421-441 (AVLTLITLGLNYSIVMMLVPG), and 499-519 (VALNFPLFGALLLWAHFLFLA). The disordered stretch occupies residues 522 to 544 (GRRRGRGRESVSKHQKKRQSYMR).

Belongs to the LIMR family. LMBRD1 subfamily.

The protein resides in the lysosome membrane. In terms of biological role, probable lysosomal cobalamin transporter. Required to export cobalamin from lysosomes allowing its conversion to cofactors. The polypeptide is Probable lysosomal cobalamin transporter (Aspergillus fumigatus (strain ATCC MYA-4609 / CBS 101355 / FGSC A1100 / Af293) (Neosartorya fumigata)).